The chain runs to 240 residues: UDP-2,3-diacylglucosamine hydrolase (240 aa).

The Mn(2+) site is built by Asp-9, His-11, Asp-43, Asn-81, and His-116. Residue 81 to 82 participates in substrate binding; the sequence is NR. Residues Asp-124, Ser-162, Lys-166, Lys-169, and His-197 each coordinate substrate. Mn(2+) is bound by residues His-197 and His-199.

This sequence belongs to the LpxH family. It depends on Mn(2+) as a cofactor.

It localises to the cell inner membrane. The enzyme catalyses UDP-2-N,3-O-bis[(3R)-3-hydroxytetradecanoyl]-alpha-D-glucosamine + H2O = 2-N,3-O-bis[(3R)-3-hydroxytetradecanoyl]-alpha-D-glucosaminyl 1-phosphate + UMP + 2 H(+). Its pathway is glycolipid biosynthesis; lipid IV(A) biosynthesis; lipid IV(A) from (3R)-3-hydroxytetradecanoyl-[acyl-carrier-protein] and UDP-N-acetyl-alpha-D-glucosamine: step 4/6. Functionally, hydrolyzes the pyrophosphate bond of UDP-2,3-diacylglucosamine to yield 2,3-diacylglucosamine 1-phosphate (lipid X) and UMP by catalyzing the attack of water at the alpha-P atom. Involved in the biosynthesis of lipid A, a phosphorylated glycolipid that anchors the lipopolysaccharide to the outer membrane of the cell. The chain is UDP-2,3-diacylglucosamine hydrolase from Neisseria meningitidis serogroup C (strain 053442).